The chain runs to 229 residues: Ribose-5-phosphate isomerase A (229 aa).

Residues 28-31, 85-88, and 98-101 each bind substrate; these read TGST, DGAD, and KGRG. The active-site Proton acceptor is Glu107. Lys125 serves as a coordination point for substrate.

It belongs to the ribose 5-phosphate isomerase family. As to quaternary structure, homodimer.

It carries out the reaction aldehydo-D-ribose 5-phosphate = D-ribulose 5-phosphate. The protein operates within carbohydrate degradation; pentose phosphate pathway; D-ribose 5-phosphate from D-ribulose 5-phosphate (non-oxidative stage): step 1/1. Its function is as follows. Catalyzes the reversible conversion of ribose-5-phosphate to ribulose 5-phosphate. The polypeptide is Ribose-5-phosphate isomerase A (Pyrococcus abyssi (strain GE5 / Orsay)).